The following is a 115-amino-acid chain: Histone H2A-Bbd type 1 (115 aa).

The disordered stretch occupies residues 1-21 (MPRRRRRRGSSGAGGRGRTCS). The segment at 87-115 (LLDMVVHNDRLLSTLFNTTTISQVAPGED) is docking domain.

The protein belongs to the histone H2A family. In terms of assembly, the nucleosome is a histone octamer containing two molecules each of H2A, H2B, H3 and H4 assembled in one H3-H4 heterotetramer and two H2A-H2B heterodimers. May be incorporated into a proportion of nucleosomes, replacing one or more H2A molecules. Present in mature sperm.

Its subcellular location is the nucleus. It localises to the chromosome. In terms of biological role, atypical histone H2A which can replace conventional H2A in some nucleosomes and is associated with active transcription and mRNA processing. Nucleosomes wrap and compact DNA into chromatin, limiting DNA accessibility to the cellular machineries which require DNA as a template. Histones thereby play a central role in transcription regulation, DNA repair, DNA replication and chromosomal stability. Nucleosomes containing this histone are less rigid and organize less DNA than canonical nucleosomes in vivo. They are enriched in actively transcribed genes and associate with the elongating form of RNA polymerase. They associate with spliceosome components and are required for mRNA splicing. This is Histone H2A-Bbd type 1 from Homo sapiens (Human).